Here is an 858-residue protein sequence, read N- to C-terminus: Leucine--tRNA ligase (858 aa).

The 'HIGH' region signature appears at 42–52 (PYPSGRLHMGH). Positions 618–622 (KMSKS) match the 'KMSKS' region motif. Lysine 621 lines the ATP pocket.

The protein belongs to the class-I aminoacyl-tRNA synthetase family.

It localises to the cytoplasm. The catalysed reaction is tRNA(Leu) + L-leucine + ATP = L-leucyl-tRNA(Leu) + AMP + diphosphate. In Vibrio cholerae serotype O1 (strain ATCC 39315 / El Tor Inaba N16961), this protein is Leucine--tRNA ligase.